We begin with the raw amino-acid sequence, 595 residues long: MFS-type transporter phomT (595 aa).

Residues 1-11 (MESDGKSDRTK) are compositionally biased toward basic and acidic residues. Positions 1–62 (MESDGKSDRT…HVSADDGPVD (62 aa)) are disordered. Positions 30 to 48 (PGHSTDTEGNGSDNNNTQV) are enriched in polar residues. Residues Asn-39 and Asn-44 are each glycosylated (N-linked (GlcNAc...) asparagine). 3 consecutive transmembrane segments (helical) span residues 91 to 111 (IILLALELAVLCVALDNTIVA), 126 to 146 (DVGWYGSAYLLTLCAFQLFFG), and 156 to 176 (WVFLSCLFIFEIGSLICGVAP). A glycan (N-linked (GlcNAc...) asparagine) is linked at Asn-177. 3 consecutive transmembrane segments (helical) span residues 186-206 (AVAGLGAAGIFSGALIIIAFS), 217-237 (ALISAIFGISSVIGPLLGGVF), and 245-265 (WCFYINLPIGGVTAVALVFFL). Asn-277 is a glycosylation site (N-linked (GlcNAc...) asparagine). 7 helical membrane passes run 290–310 (IGTAIFLPCIVCILLALQWGG), 320–340 (VVALLVLFGVLLITFVGLQFW), 362–382 (VFTGLVGASFFIMVYYLPIWF), 409–429 (IVGGVFVSFTGYYTPMMYALP), 451–471 (WIGYQILFGLGLGLGMQQGIV), 483–503 (AIGTSLQVFAQMFGGSLFVSV), and 559–579 (VIWTFRTALITTCLSVLAVIF).

Belongs to the major facilitator superfamily. TCR/Tet family.

It localises to the cell membrane. Functionally, MFS-type transporter; part of the gene cluster that mediates the biosynthesis of the phomopsins, a group of hexapeptide mycotoxins which infects lupins and causes lupinosis disease in livestock. PhomT is likely to be involved in the cellular export of phomopsins. This Diaporthe leptostromiformis (Lupinosis disease fungus) protein is MFS-type transporter phomT.